We begin with the raw amino-acid sequence, 126 residues long: MADLAKIVEDLSSLTVLEAAELAKLLEEKWGVSAAAAVAVAAGPAGGGAAAPAAEEQTEFTVVLASAGDKKIEVIKEVRAITGLGLKEAKDLVEGAPKPVKESVAKDEAEKLKAQLEKAGAKVELK.

Belongs to the bacterial ribosomal protein bL12 family. Homodimer. Part of the ribosomal stalk of the 50S ribosomal subunit. Forms a multimeric L10(L12)X complex, where L10 forms an elongated spine to which 2 to 4 L12 dimers bind in a sequential fashion. Binds GTP-bound translation factors.

Forms part of the ribosomal stalk which helps the ribosome interact with GTP-bound translation factors. Is thus essential for accurate translation. The sequence is that of Large ribosomal subunit protein bL12 from Methylorubrum populi (strain ATCC BAA-705 / NCIMB 13946 / BJ001) (Methylobacterium populi).